The chain runs to 360 residues: Photosystem II protein D1 (360 aa).

3 helical membrane-spanning segments follow: residues Tyr-29 to Thr-46, His-118 to Leu-133, and Trp-142 to Ala-156. His-118 lines the chlorophyll a pocket. Tyr-126 contacts pheophytin a. Residues Asp-170 and Glu-189 each coordinate [CaMn4O5] cluster. Residues Phe-197–Leu-218 traverse the membrane as a helical segment. His-198 lines the chlorophyll a pocket. A quinone-binding positions include His-215 and Ser-264–Phe-265. His-215 provides a ligand contact to Fe cation. His-272 contributes to the Fe cation binding site. The helical transmembrane segment at Phe-274–Ile-288 threads the bilayer. [CaMn4O5] cluster is bound by residues His-332, Glu-333, Asp-342, and Ala-344. Residues Asp-345 to Ser-360 constitute a propeptide that is removed on maturation.

Belongs to the reaction center PufL/M/PsbA/D family. As to quaternary structure, PSII is composed of 1 copy each of membrane proteins PsbA, PsbB, PsbC, PsbD, PsbE, PsbF, PsbH, PsbI, PsbJ, PsbK, PsbL, PsbM, PsbT, PsbY, PsbZ, Psb30/Ycf12, at least 3 peripheral proteins of the oxygen-evolving complex and a large number of cofactors. It forms dimeric complexes. The cofactor is The D1/D2 heterodimer binds P680, chlorophylls that are the primary electron donor of PSII, and subsequent electron acceptors. It shares a non-heme iron and each subunit binds pheophytin, quinone, additional chlorophylls, carotenoids and lipids. D1 provides most of the ligands for the Mn4-Ca-O5 cluster of the oxygen-evolving complex (OEC). There is also a Cl(-1) ion associated with D1 and D2, which is required for oxygen evolution. The PSII complex binds additional chlorophylls, carotenoids and specific lipids.. Post-translationally, tyr-161 forms a radical intermediate that is referred to as redox-active TyrZ, YZ or Y-Z.

Its subcellular location is the plastid. The protein resides in the chloroplast thylakoid membrane. It carries out the reaction 2 a plastoquinone + 4 hnu + 2 H2O = 2 a plastoquinol + O2. Functionally, photosystem II (PSII) is a light-driven water:plastoquinone oxidoreductase that uses light energy to abstract electrons from H(2)O, generating O(2) and a proton gradient subsequently used for ATP formation. It consists of a core antenna complex that captures photons, and an electron transfer chain that converts photonic excitation into a charge separation. The D1/D2 (PsbA/PsbD) reaction center heterodimer binds P680, the primary electron donor of PSII as well as several subsequent electron acceptors. The protein is Photosystem II protein D1 of Cyanidium caldarium (Red alga).